The primary structure comprises 437 residues: Homogentisate 1,2-dioxygenase (437 aa).

The disordered stretch occupies residues asparagine 15–serine 34. The Fe cation site is built by histidine 336, glutamate 342, and histidine 372.

It belongs to the homogentisate dioxygenase family. Fe cation is required as a cofactor. In terms of tissue distribution, expressed in the hypodermis and intestine.

It carries out the reaction homogentisate + O2 = 4-maleylacetoacetate + H(+). It participates in amino-acid degradation; L-phenylalanine degradation; acetoacetate and fumarate from L-phenylalanine: step 4/6. Its function is as follows. Plays a role in the tyrosine degradation pathway. In Caenorhabditis elegans, this protein is Homogentisate 1,2-dioxygenase.